Consider the following 242-residue polypeptide: MNTEKPSVAHNVDHNEIAKFEAVASRWWDLEGEFKPLHRINPLRLGYITERSGGLFGKKVLDVGCGGGILAESMAREGATVTGLDMGFEPLQVAKLHALESGIEVEYMQETVEEHAAKHAQQYDVVTCMEMLEHVPDPQSVVHACAQLVKPGGEVFFSTLNRNGKSWLMAVVGAEYILRMVPKGTHDVKKFIKPAELLSWVDETVLKEQHITGLHYNPITNTFKLGPGVDVNYMLHTRAKKA.

4 residues coordinate S-adenosyl-L-methionine: R44, G64, D85, and M129.

This sequence belongs to the methyltransferase superfamily. UbiG/COQ3 family.

The catalysed reaction is a 3-demethylubiquinol + S-adenosyl-L-methionine = a ubiquinol + S-adenosyl-L-homocysteine + H(+). The enzyme catalyses a 3-(all-trans-polyprenyl)benzene-1,2-diol + S-adenosyl-L-methionine = a 2-methoxy-6-(all-trans-polyprenyl)phenol + S-adenosyl-L-homocysteine + H(+). It functions in the pathway cofactor biosynthesis; ubiquinone biosynthesis. Functionally, O-methyltransferase that catalyzes the 2 O-methylation steps in the ubiquinone biosynthetic pathway. The polypeptide is Ubiquinone biosynthesis O-methyltransferase (Salmonella choleraesuis (strain SC-B67)).